A 495-amino-acid chain; its full sequence is 3-octaprenyl-4-hydroxybenzoate carboxy-lyase (495 aa).

A Mn(2+)-binding site is contributed by Asn-172. Residues 175 to 177 (IYR), 189 to 191 (RWL), and 194 to 195 (RG) each bind prenylated FMN. Residue Glu-238 participates in Mn(2+) binding. The active-site Proton donor is Asp-287.

The protein belongs to the UbiD family. In terms of assembly, homohexamer. It depends on prenylated FMN as a cofactor. Requires Mn(2+) as cofactor.

The protein localises to the cell membrane. The catalysed reaction is a 4-hydroxy-3-(all-trans-polyprenyl)benzoate + H(+) = a 2-(all-trans-polyprenyl)phenol + CO2. It functions in the pathway cofactor biosynthesis; ubiquinone biosynthesis. In terms of biological role, catalyzes the decarboxylation of 3-octaprenyl-4-hydroxy benzoate to 2-octaprenylphenol, an intermediate step in ubiquinone biosynthesis. This chain is 3-octaprenyl-4-hydroxybenzoate carboxy-lyase, found in Yersinia pseudotuberculosis serotype O:1b (strain IP 31758).